Here is a 162-residue protein sequence, read N- to C-terminus: ATVPLTMDGLDLQKVAGMWHSMAMAASDISLLDSETAPLRVYVQELRPTPRDNLEIILRKWEDNRCVEKKVLAEKTECAAKFNINYLDENELIVLDTDYENYLFFCLENADAPDQNLVCQCLTRTLKADNEVMEKFDRALQTLPVHVRLFFDPTQVAEQCRI.

2 disulfides stabilise this stretch: Cys66/Cys160 and Cys106/Cys119.

The protein belongs to the calycin superfamily. Lipocalin family. Monomer.

The protein localises to the secreted. In terms of biological role, lactoglobulin is the primary component of whey, it binds retinol and is probably involved in the transport of that molecule. The protein is Beta-lactoglobulin-1 (LGB1) of Felis catus (Cat).